The chain runs to 535 residues: Flavin-containing monooxygenase 2 (535 aa).

Alanine 2 is modified (N-acetylalanine). FAD is bound by residues 9-13 (GAGVS), glutamate 32, 40-41 (VW), and 61-62 (NT). NADP(+) contacts are provided by residues 60 to 61 (TN) and 195 to 198 (SGSD). Lysine 492 participates in a covalent cross-link: Glycyl lysine isopeptide (Lys-Gly) (interchain with G-Cter in SUMO). A helical transmembrane segment spans residues 510 to 530 (FSVSFLLKILGLLAVVVAFFC).

Belongs to the FMO family. It depends on FAD as a cofactor. Requires Mg(2+) as cofactor. As to expression, expressed in lung (at protein level). Expressed predominantly in lung, and at a much lesser extent in kidney. Also expressed in fetal lung, but not in liver, kidney and brain.

It is found in the microsome membrane. The protein resides in the endoplasmic reticulum membrane. Functionally, catalyzes the oxidative metabolism of numerous xenobiotics, including mainly therapeutic drugs and insecticides that contain a soft nucleophile, most commonly nitrogen and sulfur and participates to their bioactivation. Specifically catalyzes S-oxygenation of sulfur derived compounds such as thioureas-derived compounds, thioetherorganophosphates to their sulfenic acid. In vitro, catalyzes S-oxygenation of the second-line antitubercular drugs thiacetazone (TAZ) and ethionamide (ETA), forming a sulfinic acid and a carbodiimide via a postulated sulfenic acid intermediate. Also catalyzes S-oxygenation of the thioether-containing organophosphate insecticides, phorate and disulfoton. This Homo sapiens (Human) protein is Flavin-containing monooxygenase 2.